The chain runs to 217 residues: N-(5'-phosphoribosyl)anthranilate isomerase (217 aa).

This sequence belongs to the TrpF family.

It catalyses the reaction N-(5-phospho-beta-D-ribosyl)anthranilate = 1-(2-carboxyphenylamino)-1-deoxy-D-ribulose 5-phosphate. Its pathway is amino-acid biosynthesis; L-tryptophan biosynthesis; L-tryptophan from chorismate: step 3/5. This is N-(5'-phosphoribosyl)anthranilate isomerase from Chlorobium phaeobacteroides (strain BS1).